The following is a 364-amino-acid chain: Alanine racemase (364 aa).

K34 (proton acceptor; specific for D-alanine) is an active-site residue. N6-(pyridoxal phosphate)lysine is present on K34. R129 lines the substrate pocket. Y259 functions as the Proton acceptor; specific for L-alanine in the catalytic mechanism. Residue M307 coordinates substrate.

The protein belongs to the alanine racemase family. It depends on pyridoxal 5'-phosphate as a cofactor.

It carries out the reaction L-alanine = D-alanine. It functions in the pathway amino-acid biosynthesis; D-alanine biosynthesis; D-alanine from L-alanine: step 1/1. Functionally, catalyzes the interconversion of L-alanine and D-alanine. May also act on other amino acids. The protein is Alanine racemase (alr) of Coxiella burnetii (strain CbuK_Q154) (Coxiella burnetii (strain Q154)).